The chain runs to 203 residues: Probable chemoreceptor glutamine deamidase CheD (203 aa).

The protein belongs to the CheD family.

The enzyme catalyses L-glutaminyl-[protein] + H2O = L-glutamyl-[protein] + NH4(+). Functionally, probably deamidates glutamine residues to glutamate on methyl-accepting chemotaxis receptors (MCPs), playing an important role in chemotaxis. This is Probable chemoreceptor glutamine deamidase CheD from Janthinobacterium sp. (strain Marseille) (Minibacterium massiliensis).